Reading from the N-terminus, the 773-residue chain is Ergothioneine biosynthesis protein 1 (773 aa).

The tract at residues 16-322 (PESIEQSLKR…ESTIADYSTY (307 aa)) is L-histidine N(alpha)-methyltransferase. Tyr51 contacts L-histidine. Residues Gly85, Lys91, Asp112, and 142–143 (CF) contribute to the S-adenosyl-L-methionine site. L-histidine is bound by residues Asn172, Tyr212, and 287–289 (EES). The segment at 347–772 (ALRKVWLFIT…YAWIGARLVK (426 aa)) is hercynylcysteine S-oxide synthase. 3 residues coordinate Fe cation: His382, His476, and His480.

It in the N-terminal section; belongs to the methyltransferase superfamily. EgtD family. The protein in the C-terminal section; belongs to the EgtB family. Requires Fe(2+) as cofactor.

It is found in the cytoplasm. Its subcellular location is the nucleus. The catalysed reaction is L-histidine + 3 S-adenosyl-L-methionine = hercynine + 3 S-adenosyl-L-homocysteine + 3 H(+). It catalyses the reaction hercynine + L-cysteine + O2 = S-(hercyn-2-yl)-L-cysteine S-oxide + H2O. It participates in amino-acid biosynthesis; ergothioneine biosynthesis. Its function is as follows. Catalyzes the SAM-dependent triple methylation of the alpha-amino group of histidine to form hercynine and subsequent conjugation with cysteine and oxygen to form hercynylcysteine sulfoxide, the first two steps in the biosynthesis pathway of ergothioneine. May play a role in meiosis. In Schizosaccharomyces pombe (strain 972 / ATCC 24843) (Fission yeast), this protein is Ergothioneine biosynthesis protein 1.